The following is a 235-amino-acid chain: Small ribosomal subunit protein uS3 (235 aa).

One can recognise a KH type-2 domain in the interval Ile-39–Arg-107.

Belongs to the universal ribosomal protein uS3 family. As to quaternary structure, part of the 30S ribosomal subunit. Forms a tight complex with proteins S10 and S14.

Functionally, binds the lower part of the 30S subunit head. Binds mRNA in the 70S ribosome, positioning it for translation. The protein is Small ribosomal subunit protein uS3 of Sphingopyxis alaskensis (strain DSM 13593 / LMG 18877 / RB2256) (Sphingomonas alaskensis).